A 160-amino-acid chain; its full sequence is Transcription elongation factor GreA (160 aa).

A coiled-coil region spans residues 1 to 72; sequence MAEKTYVMTL…QIQILETKIR (72 aa).

It belongs to the GreA/GreB family.

Functionally, necessary for efficient RNA polymerase transcription elongation past template-encoded arresting sites. The arresting sites in DNA have the property of trapping a certain fraction of elongating RNA polymerases that pass through, resulting in locked ternary complexes. Cleavage of the nascent transcript by cleavage factors such as GreA or GreB allows the resumption of elongation from the new 3'terminus. GreA releases sequences of 2 to 3 nucleotides. The chain is Transcription elongation factor GreA from Streptococcus thermophilus (strain CNRZ 1066).